Reading from the N-terminus, the 351-residue chain is Phenylacetaldoxime dehydratase (351 aa).

This sequence belongs to the heme-containing dehydratase family. In terms of assembly, monomer. It depends on heme b as a cofactor.

It carries out the reaction (Z)-phenylacetaldehyde oxime = phenylacetonitrile + H2O. Catalyzes the stoichiometric dehydration of Z-phenylacetaldoxime to phenylacetonitrile. Prefers the Z-form of phenylacetaldoxime over its E-isomer. The sequence is that of Phenylacetaldoxime dehydratase from Bacillus sp. (strain OxB-1).